A 124-amino-acid chain; its full sequence is MATTKEDVLEFISNLSVLELSELVKEFEEKFGVTAQATVVAAGGAAAGGEAAEEQTEFNVVLTDAGAKKINAIKVVRAITGLGLKEAKAAVEETPTVLKEGVSKEEAEEFKKQIEEAGASCELK.

This sequence belongs to the bacterial ribosomal protein bL12 family. As to quaternary structure, homodimer. Part of the ribosomal stalk of the 50S ribosomal subunit. Forms a multimeric L10(L12)X complex, where L10 forms an elongated spine to which 2 to 4 L12 dimers bind in a sequential fashion. Binds GTP-bound translation factors.

Its function is as follows. Forms part of the ribosomal stalk which helps the ribosome interact with GTP-bound translation factors. Is thus essential for accurate translation. This is Large ribosomal subunit protein bL12 from Sulfurovum sp. (strain NBC37-1).